We begin with the raw amino-acid sequence, 260 residues long: Acetylglutamate kinase (260 aa).

Residues 46–47 (GG), Arg68, and Asn160 contribute to the substrate site.

Belongs to the acetylglutamate kinase family. ArgB subfamily.

It localises to the cytoplasm. The enzyme catalyses N-acetyl-L-glutamate + ATP = N-acetyl-L-glutamyl 5-phosphate + ADP. It participates in amino-acid biosynthesis; L-arginine biosynthesis; N(2)-acetyl-L-ornithine from L-glutamate: step 2/4. Functionally, catalyzes the ATP-dependent phosphorylation of N-acetyl-L-glutamate. The protein is Acetylglutamate kinase of Shewanella denitrificans (strain OS217 / ATCC BAA-1090 / DSM 15013).